Here is a 359-residue protein sequence, read N- to C-terminus: Probable ribonucleotide transport ATP-binding protein mkl (359 aa).

Positions 28–264 (IEVNGLTKSF…DEPVVRQFLN (237 aa)) constitute an ABC transporter domain. 60-67 (GPSGTGKS) lines the ATP pocket.

Belongs to the ABC transporter superfamily.

Not known, could be involved in the transport of ribonucleotides. This is Probable ribonucleotide transport ATP-binding protein mkl (mkl) from Mycobacterium bovis (strain ATCC BAA-935 / AF2122/97).